Consider the following 422-residue polypeptide: Trichothecene biosynthesis transcription regulator TRI10 (422 aa).

This sequence belongs to the TRI10 transcription regulator family.

It is found in the nucleus. In terms of biological role, transcriptional activator of all of the trichothecene biosynthesis genes. Acts upstream of the cluster-encoded transcription factor TRI6 and is necessary for full expression of both the other trichothecene genes and the genes for the primary metabolic pathway that precedes the trichothecene biosynthetic pathway. The polypeptide is Trichothecene biosynthesis transcription regulator TRI10 (Trichoderma arundinaceum).